We begin with the raw amino-acid sequence, 90 residues long: Small ribosomal subunit protein bS16 (90 aa).

It belongs to the bacterial ribosomal protein bS16 family.

This is Small ribosomal subunit protein bS16 from Geobacillus kaustophilus (strain HTA426).